The following is a 273-amino-acid chain: Programmed cell death 1 ligand 2 (273 aa).

Positions 1-19 are cleaved as a signal peptide; sequence MIFLLLMLSLELQLHQIAA. The Extracellular portion of the chain corresponds to 20–220; that stretch reads LFTVTVPKEL…SQMEPRTHPT (201 aa). In terms of domain architecture, Ig-like V-type spans 21-118; the sequence is FTVTVPKELY…AWDYKYLTLK (98 aa). N-linked (GlcNAc...) asparagine glycans are attached at residues Asn-37, Asn-64, Asn-157, Asn-163, and Asn-189. Intrachain disulfides connect Cys-42–Cys-102 and Cys-143–Cys-192. The 82-residue stretch at 122 to 203 folds into the Ig-like C2-type domain; the sequence is SYRKINTHIL…FWNTHVRELT (82 aa). Residues 221-241 traverse the membrane as a helical segment; that stretch reads WLLHIFIPFCIIAFIFIATVI. Residues 242–273 are Cytoplasmic-facing; it reads ALRKQLCQKLYSSKDTTKRPVTTTKREVNSAI.

It belongs to the immunoglobulin superfamily. BTN/MOG family. As to quaternary structure, interacts with PDCD1. Highly expressed in heart, placenta, pancreas, lung and liver and weakly expressed in spleen, lymph nodes and thymus.

The protein resides in the secreted. It localises to the endomembrane system. It is found in the cell membrane. Functionally, involved in the costimulatory signal, essential for T-cell proliferation and IFNG production in a PDCD1-independent manner. Interaction with PDCD1 inhibits T-cell proliferation by blocking cell cycle progression and cytokine production. The protein is Programmed cell death 1 ligand 2 (PDCD1LG2) of Homo sapiens (Human).